We begin with the raw amino-acid sequence, 136 residues long: Late embryogenesis abundant protein D-7 (136 aa).

Disordered regions lie at residues 1–108 and 117–136; these read MASH…AQGA and GMADADEDEHNYPATVTRKD. Positions 11 to 58 are enriched in basic and acidic residues; the sequence is GRAEGRAHEKGEQMKESMKEKAEAAKQKTMETAEAAKQKTMETAEAAK. LEA 11-mer repeat repeat units lie at residues 31–41, 42–52, 53–63, 64–74, and 75–85; these read KAEAAKQKTME, TAEAAKQKTME, TAEAAKQKTRG, AAETTNDKTKQ, and TAGAARGKAEE.

This sequence belongs to the LEA type 4 family.

Its function is as follows. LEA proteins are late embryonic proteins abundant in higher plant seed embryos. There are two subsets of LEA proteins (5a and 5b), the first ones are expressed when the cotyledon weight reach 80 mg and the second set are expressed above 100 mg. The function of those proteins is not known. The protein is Late embryogenesis abundant protein D-7 of Gossypium hirsutum (Upland cotton).